The sequence spans 337 residues: MKLVDRFRGAATGTSRRLMVGAVGAALLSGLVGFVGGSATASAFSRPGLPVEYLQVPSVAMGRNIKVQFQSGGANSPALYLLDGMRAQDDFSGWDINTPAFEWYYQSGISVAMPVGGQSSFYSDWYNPACGKAGCTTYKWETFLTSELPQYLSANKGVKPTGSGVVGLSMAGSSALILAAYHPDQFVYSGSLSALLDPSQGIGPSLIGLAMGDAGGYKASDMWGPKDDPAWARNDPMLQVGKLVANNTRIWVYCGNGKPSDLGGDNLPAKFLEGFVRTSNMKFQAAYNAAGGHNAVWNFDDNGTHSWEYWGAQLNAMRPDLQHTLGATPNTGDTQGA.

Positions 1-42 (MKLVDRFRGAATGTSRRLMVGAVGAALLSGLVGFVGGSATAS) are cleaved as a signal peptide. 85 to 86 (MR) is a substrate binding site. The interval 101–111 (FEWYYQSGISV) is fibronectin-binding. Cysteine 130 and cysteine 135 are disulfide-bonded. Substrate is bound by residues serine 169 and aspartate 197. Serine 169 functions as the Nucleophile in the catalytic mechanism. Glutamate 273 is a catalytic residue. Substrate is bound by residues 275 to 278 (FVRT), lysine 282, and 305 to 307 (HSW). Histidine 305 is an active-site residue.

Belongs to the mycobacterial A85 antigen family. In terms of assembly, homodimer.

The protein localises to the secreted. The protein resides in the cell wall. It is found in the cytoplasm. The enzyme catalyses an acyl-CoA + a 1,2-diacyl-sn-glycerol = a triacyl-sn-glycerol + CoA. The catalysed reaction is 2 alpha,alpha'-trehalose 6-mycolate = alpha,alpha'-trehalose 6,6'-bismycolate + alpha,alpha-trehalose. Its function is as follows. The antigen 85 proteins (FbpA, FbpB, FbpC) are responsible for the high affinity of mycobacteria for fibronectin, a large adhesive glycoprotein, which facilitates the attachment of M.tuberculosis to murine alveolar macrophages (AMs). They also help to maintain the integrity of the cell wall by catalyzing the transfer of mycolic acids to cell wall arabinogalactan, and through the synthesis of alpha,alpha-trehalose dimycolate (TDM, cord factor). They catalyze the transfer of a mycoloyl residue from one molecule of alpha,alpha-trehalose monomycolate (TMM) to another TMM, leading to the formation of TDM. FbpA mediates triacylglycerol (TAG) formation with long-chain acyl-CoA as the acyl donor and 1,2-dipalmitoyl-sn-glycerol (1,2-dipalmitin) as the acyl acceptor. It has a preference for C26:0-CoA over C18:1-CoA. This chain is Diacylglycerol acyltransferase/mycolyltransferase Ag85A (fbpA), found in Mycobacterium ulcerans.